Consider the following 128-residue polypeptide: Nucleoside diphosphate kinase B (128 aa).

M1 is subject to N-acetylmethionine. ATP is bound by residues K9, F39, T70, R81, and N91. Catalysis depends on H94, which acts as the Pros-phosphohistidine intermediate.

The protein belongs to the NDK family. The cofactor is Mg(2+).

The protein localises to the cytoplasm. It localises to the nucleus. It is found in the cell projection. Its subcellular location is the lamellipodium. The protein resides in the ruffle. The catalysed reaction is a 2'-deoxyribonucleoside 5'-diphosphate + ATP = a 2'-deoxyribonucleoside 5'-triphosphate + ADP. The enzyme catalyses a ribonucleoside 5'-diphosphate + ATP = a ribonucleoside 5'-triphosphate + ADP. Major role in the synthesis of nucleoside triphosphates other than ATP. In Merluccius australis australis (Austral hake), this protein is Nucleoside diphosphate kinase B (nme2).